A 141-amino-acid polypeptide reads, in one-letter code: Putative nickel-responsive regulator (141 aa).

H80, H91, H93, and C99 together coordinate Ni(2+).

The protein belongs to the transcriptional regulatory CopG/NikR family. Requires Ni(2+) as cofactor.

Functionally, transcriptional regulator. The protein is Putative nickel-responsive regulator of Methanococcus maripaludis (strain C5 / ATCC BAA-1333).